Consider the following 317-residue polypeptide: Ribose-phosphate pyrophosphokinase (317 aa).

ATP-binding positions include 43–45 (DGE) and 102–103 (RQ). Mg(2+)-binding residues include His-136 and Asp-175. Lys-198 is an active-site residue. D-ribose 5-phosphate-binding positions include Arg-200, Asp-224, and 228 to 232 (DTAGT).

This sequence belongs to the ribose-phosphate pyrophosphokinase family. Class I subfamily. In terms of assembly, homohexamer. Requires Mg(2+) as cofactor.

Its subcellular location is the cytoplasm. It carries out the reaction D-ribose 5-phosphate + ATP = 5-phospho-alpha-D-ribose 1-diphosphate + AMP + H(+). It participates in metabolic intermediate biosynthesis; 5-phospho-alpha-D-ribose 1-diphosphate biosynthesis; 5-phospho-alpha-D-ribose 1-diphosphate from D-ribose 5-phosphate (route I): step 1/1. In terms of biological role, involved in the biosynthesis of the central metabolite phospho-alpha-D-ribosyl-1-pyrophosphate (PRPP) via the transfer of pyrophosphoryl group from ATP to 1-hydroxyl of ribose-5-phosphate (Rib-5-P). The polypeptide is Ribose-phosphate pyrophosphokinase (Corynebacterium ammoniagenes (Brevibacterium ammoniagenes)).